The following is a 423-amino-acid chain: Histidine--tRNA ligase (423 aa).

Belongs to the class-II aminoacyl-tRNA synthetase family. In terms of assembly, homodimer.

Its subcellular location is the cytoplasm. It catalyses the reaction tRNA(His) + L-histidine + ATP = L-histidyl-tRNA(His) + AMP + diphosphate + H(+). The chain is Histidine--tRNA ligase from Orientia tsutsugamushi (strain Ikeda) (Rickettsia tsutsugamushi).